Reading from the N-terminus, the 403-residue chain is Leu/Ile/Val-binding protein homolog 8 (403 aa).

Positions 1–26 (MRLSRLLIGASLGVALSSTVFTAALA) are cleaved as a signal peptide.

It belongs to the leucine-binding protein family.

Its function is as follows. Component of an amino-acid transport system. The sequence is that of Leu/Ile/Val-binding protein homolog 8 from Brucella melitensis biotype 1 (strain ATCC 23456 / CCUG 17765 / NCTC 10094 / 16M).